The following is a 178-amino-acid chain: Large ribosomal subunit protein uL6 (178 aa).

The protein belongs to the universal ribosomal protein uL6 family. In terms of assembly, part of the 50S ribosomal subunit.

This protein binds to the 23S rRNA, and is important in its secondary structure. It is located near the subunit interface in the base of the L7/L12 stalk, and near the tRNA binding site of the peptidyltransferase center. This Corynebacterium urealyticum (strain ATCC 43042 / DSM 7109) protein is Large ribosomal subunit protein uL6.